We begin with the raw amino-acid sequence, 237 residues long: Dihydroceramide fatty acyl 2-hydroxylase FAH2 (237 aa).

A run of 2 helical transmembrane segments spans residues 54–74 and 77–97; these read VWWAIPTIWLPVVCYVLSISA and GLTFPQIGLIVAFGVLTWTLL. Residues His-102, His-107, His-123, His-126, and His-127 each contribute to the Zn(2+) site. The next 2 membrane-spanning stretches (helical) occupy residues 134-154 and 156-176; these read LRLVFPPTATAILLVPLWKLL and LLATPATAPAILGGILFGYVM. 5 residues coordinate Zn(2+): His-181, His-185, His-201, His-204, and His-205.

The protein belongs to the sterol desaturase family. In terms of assembly, interacts with CYTB5-A, CYTB5-B, CYTB5-C and CYTB5-D. The cofactor is Zn(2+). As to expression, expressed in leaves, roots, flowers and seeds.

The protein localises to the endoplasmic reticulum membrane. It catalyses the reaction an N-(1,2-saturated acyl)sphinganine + 2 Fe(II)-[cytochrome b5] + O2 + 2 H(+) = an N-[(2'R)-hydroxyacyl]sphinganine + 2 Fe(III)-[cytochrome b5] + H2O. Its function is as follows. Fatty acid 2-hydroxylase involved in the alpha-hydroxylation of the long-chain fatty acid (LCFA) palmitic acid. Probably involved in the resistance response to oxidative stress. This chain is Dihydroceramide fatty acyl 2-hydroxylase FAH2, found in Arabidopsis thaliana (Mouse-ear cress).